Reading from the N-terminus, the 186-residue chain is Casparian strip membrane protein 5 (186 aa).

The Cytoplasmic portion of the chain corresponds to 1 to 25 (MKTDAIELGVAKDSTPIGGANRGVS). Residues 26–46 (ILDFILRLVALVGTLASAILM) form a helical membrane-spanning segment. Over 47–73 (GTTNETLPFATQFIRFRAEYDDLPTFT) the chain is Extracellular. The N-linked (GlcNAc...) asparagine glycan is linked to Asn-50. Residues 74 to 94 (FFVVANIVVSGYLLLSLPLSI) traverse the membrane as a helical segment. Residues 95–106 (VNIVRSTAKNRR) are Cytoplasmic-facing. Residues 107-127 (IILIIFDTAMLALLTAGASAA) traverse the membrane as a helical segment. Residues 128-156 (AAIVYLAHKGNTRANWFAICQQFNSFCER) are Extracellular-facing. The chain crosses the membrane as a helical span at residues 157–177 (ISGSLIGSFVGVAVFILLILM). The Cytoplasmic segment spans residues 178-186 (SASALSRRN).

This sequence belongs to the Casparian strip membrane proteins (CASP) family. In terms of assembly, homodimer and heterodimers.

The protein resides in the cell membrane. In terms of biological role, regulates membrane-cell wall junctions and localized cell wall deposition. Required for establishment of the Casparian strip membrane domain (CSD) and the subsequent formation of Casparian strips, a cell wall modification of the root endodermis that determines an apoplastic barrier between the intraorganismal apoplasm and the extraorganismal apoplasm and prevents lateral diffusion. The sequence is that of Casparian strip membrane protein 5 from Ricinus communis (Castor bean).